The following is a 291-amino-acid chain: GCN5-related N-acetyltransferase 4, chloroplastic (291 aa).

The transit peptide at 1–61 directs the protein to the chloroplast; it reads MRSTPLGTTA…PSQINSGACN (61 aa). In terms of domain architecture, N-acetyltransferase spans 76-280; sequence IVVREARLED…RFTFMMKLVN (205 aa). Residues 199 to 201 and 207 to 212 each bind acetyl-CoA; these read VAV and RKGIAK. N6-acetyllysine is present on K217. Acetyl-CoA-binding positions include 238-240 and Y245; that span reads NLG. Residue Y245 is the Proton donor of the active site. K254 and K265 each carry N6-acetyllysine.

It belongs to the acetyltransferase family. GNAT subfamily. Oligomer. Autoacetylated at K-217, K-254 and K-265. In terms of tissue distribution, expressed in green tissues.

It is found in the plastid. The protein resides in the chloroplast. The catalysed reaction is an N-terminal L-alpha-aminoacyl-[protein] + acetyl-CoA = N-terminal N(alpha)-acetyl-L-alpha-aminoacyl-[protein] + CoA + H(+). It catalyses the reaction L-lysyl-[protein] + acetyl-CoA = N(6)-acetyl-L-lysyl-[protein] + CoA + H(+). It carries out the reaction N-terminal L-alanyl-[protein] + acetyl-CoA = N-terminal N(alpha)-acetyl-L-alanyl-[protein] + CoA + H(+). The enzyme catalyses N-terminal L-seryl-[protein] + acetyl-CoA = N-terminal N(alpha)-acetyl-L-seryl-[protein] + CoA + H(+). The catalysed reaction is N-terminal L-threonyl-[protein] + acetyl-CoA = N-terminal N(alpha)-acetyl-L-threonyl-[protein] + CoA + H(+). It catalyses the reaction N-terminal L-methionyl-[protein] + acetyl-CoA = N-terminal N(alpha)-acetyl-L-methionyl-[protein] + CoA + H(+). It carries out the reaction N-terminal L-valyl-[protein] + acetyl-CoA = N-terminal N(alpha)-acetyl-L-valyl-[protein] + CoA + H(+). The enzyme catalyses N-terminal glycyl-[protein] + acetyl-CoA = N-terminal N(alpha)-acetylglycyl-[protein] + CoA + H(+). Functionally, protein acetyltransferase with dual specificity triggering both N-alpha-acetylation (NTA), with a large spectrum of modified N-termini, including methionine, alanine, serine, threonine and to a lower extent glycine and valine as substrates, and epsilon-lysine acetylation (KA) of several plastid proteins. The sequence is that of GCN5-related N-acetyltransferase 4, chloroplastic from Arabidopsis thaliana (Mouse-ear cress).